A 290-amino-acid chain; its full sequence is Diaminopimelate epimerase (290 aa).

Substrate is bound by residues Asn-17, Gln-49, and Asn-69. Residue Cys-78 is the Proton donor of the active site. Substrate contacts are provided by residues 79 to 80 (GN), Asn-166, Asn-199, and 217 to 218 (ER). Cys-226 acts as the Proton acceptor in catalysis. 227–228 (GS) provides a ligand contact to substrate.

Belongs to the diaminopimelate epimerase family. As to quaternary structure, homodimer.

Its subcellular location is the cytoplasm. It carries out the reaction (2S,6S)-2,6-diaminopimelate = meso-2,6-diaminopimelate. It participates in amino-acid biosynthesis; L-lysine biosynthesis via DAP pathway; DL-2,6-diaminopimelate from LL-2,6-diaminopimelate: step 1/1. In terms of biological role, catalyzes the stereoinversion of LL-2,6-diaminopimelate (L,L-DAP) to meso-diaminopimelate (meso-DAP), a precursor of L-lysine and an essential component of the bacterial peptidoglycan. The protein is Diaminopimelate epimerase of Nitrobacter hamburgensis (strain DSM 10229 / NCIMB 13809 / X14).